The sequence spans 1551 residues: Dual oxidase 1 (1551 aa).

The signal sequence occupies residues 1-21 (MGFCLALAWTLLVGAWTPLGA). The Extracellular portion of the chain corresponds to 22–596 (QNPISWEVQR…YFEGSGFGFG (575 aa)). The interval 26-593 (SWEVQRFDGW…VRDYFEGSGF (568 aa)) is peroxidase-like; mediates peroxidase activity. Asn94 carries N-linked (GlcNAc...) asparagine glycosylation. The segment at 150–172 (RWDPETGRSPSNPRDPANQVTGW) is disordered. Residues Asn342, Asn354, Asn461, and Asn534 are each glycosylated (N-linked (GlcNAc...) asparagine). Residues 597–617 (VTIGTLCCFPLVSLLSAWIVA) form a helical membrane-spanning segment. At 618–1044 (RLRMRNFKRL…KRFIENYRRH (427 aa)) the chain is on the cytoplasmic side. EF-hand domains are found at residues 815–850 (PQDMFVESMFSLADKDGNGYLSFREFLDILVVFMKG), 851–886 (SPEEKSRLMFRMYDFDGNGLISKDEFIRMLRSFIEI), and 895–930 (QLAEVVESMFRESGFQDKEELTWEDFHFMLRDHNSE). Residues Asp828, Asp830, Asn832, Tyr834, Glu839, Asp864, Asp866, Asn868, and Glu875 each coordinate Ca(2+). Residues 956–1248 (YISQDMICPS…GSFALIQLPR (293 aa)) form an interaction with TXNDC11 region. A helical membrane pass occupies residues 1045–1065 (IGCVAVFYAIAGGLFLERAYY). Residues 1066–1080 (YAFAAHHTGITDTTR) lie on the Extracellular side of the membrane. Residues 1081–1101 (VGIILSRGTAASISFMFSYIL) form a helical membrane-spanning segment. In terms of domain architecture, Ferric oxidoreductase spans 1087–1269 (RGTAASISFM…YGGDKLVSLS (183 aa)). Topologically, residues 1102-1148 (LTMCRNLITFLRETFLNRYVPFDAAVDFHRLIASTAIVLTVLHSVGH) are cytoplasmic. A helical membrane pass occupies residues 1149–1171 (VVNVYLFSISPLSVLSCLFPGLF). The Extracellular segment spans residues 1172–1188 (HDDGSELPQKYYWWFFQ). Residues 1189–1209 (TVPGLTGVVLLLILAIMYVFA) form a helical membrane-spanning segment. Residues 1210 to 1226 (SHHFRRRSFRGFWLTHH) are Cytoplasmic-facing. A helical membrane pass occupies residues 1227-1247 (LYILLYVLLIIHGSFALIQLP). Arg1248 is a topological domain (extracellular). A helical membrane pass occupies residues 1249-1269 (FHIFFLVPAIIYGGDKLVSLS). Residues 1270-1376 (RKKVEISVVK…DGPFGEGHQE (107 aa)) enclose the FAD-binding FR-type domain. The Cytoplasmic segment spans residues 1270-1551 (RKKVEISVVK…THFSHHYENF (282 aa)).

The protein in the N-terminal section; belongs to the peroxidase family. Interacts with TXNDC11, TPO and CYBA. Post-translationally, N-glycosylated. In terms of tissue distribution, expressed in thyrocytes and tracheal surface epithelial cells (at protein level). Expressed in thyroid, trachea, bronchium, and to a lower extent, in placenta, testis, prostate, pancreas and heart.

The protein localises to the apical cell membrane. It catalyses the reaction NADH + O2 + H(+) = H2O2 + NAD(+). The enzyme catalyses NADPH + O2 + H(+) = H2O2 + NADP(+). It participates in hormone biosynthesis; thyroid hormone biosynthesis. With respect to regulation, the NADPH oxidase activity is calcium-dependent. Peroxidase activity is inhibited by aminobenzohydrazide. Its function is as follows. Generates hydrogen peroxide which is required for the activity of thyroid peroxidase/TPO and lactoperoxidase/LPO. Plays a role in thyroid hormones synthesis and lactoperoxidase-mediated antimicrobial defense at the surface of mucosa. May have its own peroxidase activity through its N-terminal peroxidase-like domain. The chain is Dual oxidase 1 (DUOX1) from Homo sapiens (Human).